Here is a 189-residue protein sequence, read N- to C-terminus: Nuclear distribution protein nudE homolog 1 (189 aa).

A coiled-coil region spans residues 4–121 (NLDLETAIQI…LRVSKEEATS (118 aa)). Positions 114 to 126 (VSKEEATSGETRR) are enriched in basic and acidic residues. The segment at 114–139 (VSKEEATSGETRRNTRSLPSQNKKMK) is disordered.

This sequence belongs to the nudE family. In terms of assembly, self-associates. Interacts with PAC1.

Its subcellular location is the nucleus. The protein resides in the cytoplasm. It is found in the cytoskeleton. In terms of biological role, required for nuclear migration to the bud neck during cell division. Targets cytoplasmic dynein to microtubule plus ends thereby promoting dynein-mediated microtubule sliding along the bud cortex and consequently the movement of the mitotic spindle to the bud neck. This Saccharomyces cerevisiae (strain ATCC 204508 / S288c) (Baker's yeast) protein is Nuclear distribution protein nudE homolog 1 (NDL1).